The sequence spans 5162 residues: Linear gramicidin synthase subunit B (5162 aa).

4 consecutive Carrier domains span residues 963–1038 (APRN…QALR), 2027–2101 (EPQS…VVLE), 3541–3616 (APRN…GAIG), and 4601–4675 (AATS…GQST). O-(pantetheine 4'-phosphoryl)serine occurs at positions 998, 2062, 3576, and 4636.

The protein belongs to the ATP-dependent AMP-binding enzyme family. In terms of assembly, large multienzyme complex composed of 4 subunits; LgrA, LgrB, LgrC and LgrD. Pantetheine 4'-phosphate serves as cofactor.

Activates the 3rd to 6th amino acids (Ala, D-Leu, Ala and D-Val) in linear gramicidin and catalyzes the formation of the peptide bond between them. This enzyme is also responsible for the epimerization of the 4th (D-Leu) and the 6th (D-Val) amino acids. This is Linear gramicidin synthase subunit B (lgrB) from Brevibacillus parabrevis.